A 414-amino-acid polypeptide reads, in one-letter code: MTQANLSETLFKPRFKHPETSTLVRRFNHGAQPPVQSALDGKTIPHWYRMINRLMWIWRGIDPREILDVQARIVMSDAERTDDDLYDTVIGYRGGNWIYEWATQAMVWQQKACAEEDPQLSGRHWLHAATLYNIAAYPHLKGDDLAEQAQALSNRAYEEAAQRLPGTMRQMEFTVPGGAPITGFLHMPKGDGPFPTVLMCGGLDAMQTDYYSLYERYFAPRGIAMLTIDMPSVGFSSKWKLTQDSSLLHQHVLKALPNVPWVDHTRVAAFGFRFGANVAVRLAYLESPRLKAVACLGPVVHTLLSDFKCQQQVPEMYLDVLASRLGMHDASDEALRVELNRYSLKVQGLLGRRCPTPMLSGYWKNDPFSPEEDSRLITSSSADGKLLEIPFNPVYRNFDKGLQEITGWIEKRLC.

This sequence belongs to the FrsA family.

It catalyses the reaction a carboxylic ester + H2O = an alcohol + a carboxylate + H(+). Functionally, catalyzes the hydrolysis of esters. In Escherichia coli O8 (strain IAI1), this protein is Esterase FrsA.